Consider the following 131-residue polypeptide: Interleukin-13 (131 aa).

Residues Met1 to Ala18 form the signal peptide. 4 N-linked (GlcNAc...) asparagine glycosylation sites follow: Asn38, Asn48, Asn56, and Asn71. 2 disulfide bridges follow: Cys47-Cys75 and Cys63-Cys89.

It belongs to the IL-4/IL-13 family. In terms of assembly, interacts with IL13RA2.

It localises to the secreted. Its function is as follows. Cytokine that plays important roles in allergic inflammation and immune response to parasite infection. Synergizes with IL2 in regulating interferon-gamma synthesis. Stimulates B-cell proliferation, and activation of eosinophils, basophils, and mast cells. Plays an important role in controlling IL33 activity by modulating the production of transmembrane and soluble forms of interleukin-1 receptor-like 1/IL1RL1. Displays the capacity to antagonize Th1-driven proinflammatory immune response and downregulates synthesis of many proinflammatory cytokines including IL1, IL6, IL10, IL12 and TNF-alpha through a mechanism that partially involves suppression of NF-kappa-B. Also functions on nonhematopoietic cells, including endothelial cells where it induces vascular cell adhesion protein 1/VCAM1, which is important in the recruitment of eosinophils. Exerts its biological effects through its receptors which comprises the IL4R chain and the IL13RA1 chain, to activate JAK1 and TYK2, leading to the activation of STAT6. Aside from IL13RA1, another receptor IL13RA2 acts as a high affinity decoy for IL13 and mediates internalization and depletion of extracellular IL13. This chain is Interleukin-13 (IL13), found in Canis lupus familiaris (Dog).